The primary structure comprises 382 residues: Alkanesulfonate monooxygenase (382 aa).

Belongs to the SsuD family.

The enzyme catalyses an alkanesulfonate + FMNH2 + O2 = an aldehyde + FMN + sulfite + H2O + 2 H(+). Catalyzes the desulfonation of aliphatic sulfonates. This Pseudomonas entomophila (strain L48) protein is Alkanesulfonate monooxygenase.